Reading from the N-terminus, the 70-residue chain is Alpha-conotoxin EIIB (70 aa).

The N-terminal stretch at 1 to 21 is a signal peptide; that stretch reads MGMRMMFIVFLLVVLATTVVS. The propeptide occupies 22–51; that stretch reads FTLDHVLGLASEGRNAKAIDNALDQRDPKR. Pyrrolidone carboxylic acid is present on Gln-52. At Pro-54 the chain carries Hydroxyproline. Intrachain disulfides connect Cys-56–Cys-62 and Cys-57–Cys-67. Residue Cys-67 is modified to Cysteine amide.

As to expression, expressed by the venom duct.

The protein resides in the secreted. Functionally, alpha-conotoxins bind to the nicotinic acetylcholine receptors (nAChR) and inhibit them. This peptide potently blocks muscular nicotinic acetylcholine receptor (CHRNA1-CHRNB1-CHRNG-CHRND), and has no effect on neuronal receptors. It is able to totally displace [125I]-Bgtx from the Torpedo receptor with an inhibition constant (Ki) of 2.2 and 0.7 nM. The protein is Alpha-conotoxin EIIB of Conus ermineus (Agate cone).